The chain runs to 256 residues: Triosephosphate isomerase (256 aa).

Residue 12–14 (NWK) coordinates substrate. The Electrophile role is filled by histidine 99. Glutamate 169 serves as the catalytic Proton acceptor. Residues glycine 175, serine 214, and 235-236 (GG) contribute to the substrate site.

This sequence belongs to the triosephosphate isomerase family. Homodimer.

The protein localises to the cytoplasm. It carries out the reaction D-glyceraldehyde 3-phosphate = dihydroxyacetone phosphate. It participates in carbohydrate biosynthesis; gluconeogenesis. It functions in the pathway carbohydrate degradation; glycolysis; D-glyceraldehyde 3-phosphate from glycerone phosphate: step 1/1. Functionally, involved in the gluconeogenesis. Catalyzes stereospecifically the conversion of dihydroxyacetone phosphate (DHAP) to D-glyceraldehyde-3-phosphate (G3P). This is Triosephosphate isomerase from Mesorhizobium japonicum (strain LMG 29417 / CECT 9101 / MAFF 303099) (Mesorhizobium loti (strain MAFF 303099)).